We begin with the raw amino-acid sequence, 25 residues long: Histone H1.1 (25 aa).

Residues 1–25 (MVSEAIAALKEREGSSEFAIGKKKE) form the H15 domain. The interval 1–25 (MVSEAIAALKEREGSSEFAIGKKKE) is disordered. The segment covering 9 to 25 (LKEREGSSEFAIGKKKE) has biased composition (basic and acidic residues).

Its subcellular location is the nucleus. The protein localises to the chromosome. Its function is as follows. Histones H1 are necessary for the condensation of nucleosome chains into higher-order structures. In Triticum aestivum (Wheat), this protein is Histone H1.1.